Consider the following 336-residue polypeptide: O-methyltransferase 2 (336 aa).

S-adenosyl-L-methionine is bound by residues G170, D198, N221, F222, and K237. H241 functions as the Proton acceptor in the catalytic mechanism.

The protein belongs to the class I-like SAM-binding methyltransferase superfamily. Cation-independent O-methyltransferase family. COMT subfamily.

The catalysed reaction is (3,5-dichloro-2,4,6-trihydroxyphenyl)hexan-1-one + S-adenosyl-L-methionine = 1-(3,5-dichloro-2,6-dihydroxy-4-methoxyphenyl)hexan-1-one + S-adenosyl-L-homocysteine + H(+). The chain is O-methyltransferase 2 (omt2) from Dictyostelium discoideum (Social amoeba).